We begin with the raw amino-acid sequence, 300 residues long: Inosose dehydratase (300 aa).

The protein belongs to the IolE/MocC family. The cofactor is glutathione. It depends on Co(2+) as a cofactor. Requires Mn(2+) as cofactor.

It carries out the reaction scyllo-inosose = 3D-3,5/4-trihydroxycyclohexane-1,2-dione + H2O. It functions in the pathway polyol metabolism; myo-inositol degradation into acetyl-CoA; acetyl-CoA from myo-inositol: step 2/7. Functionally, catalyzes the dehydration of inosose (2-keto-myo-inositol, 2KMI or 2,4,6/3,5-pentahydroxycyclohexanone) to 3D-(3,5/4)-trihydroxycyclohexane-1,2-dione (D-2,3-diketo-4-deoxy-epi-inositol). This is Inosose dehydratase from Bacillus licheniformis (strain ATCC 14580 / DSM 13 / JCM 2505 / CCUG 7422 / NBRC 12200 / NCIMB 9375 / NCTC 10341 / NRRL NRS-1264 / Gibson 46).